A 317-amino-acid polypeptide reads, in one-letter code: Probable F-box protein At2g36090 (317 aa).

Residues 25 to 74 (IESHILTRLDGATLASVSCASSHLHHLASNEILWSKICRSTWPSCSGGSR) form the F-box domain.

The chain is Probable F-box protein At2g36090 from Arabidopsis thaliana (Mouse-ear cress).